Reading from the N-terminus, the 380-residue chain is Cytochrome b (380 aa).

Transmembrane regions (helical) follow at residues 34–54, 78–99, 114–134, and 179–199; these read FGSL…LLAM, WLIR…YLHI, WNTG…GYVL, and FFAL…IHLT. 2 residues coordinate heme b: H84 and H98. 2 residues coordinate heme b: H183 and H197. H202 contacts a ubiquinone. 4 helical membrane-spanning segments follow: residues 227–247, 289–309, 321–341, and 348–368; these read LKDA…ALFS, LGGV…PLLH, LSQL…WIGS, and FIII…ILFP.

It belongs to the cytochrome b family. As to quaternary structure, the cytochrome bc1 complex contains 11 subunits: 3 respiratory subunits (MT-CYB, CYC1 and UQCRFS1), 2 core proteins (UQCRC1 and UQCRC2) and 6 low-molecular weight proteins (UQCRH/QCR6, UQCRB/QCR7, UQCRQ/QCR8, UQCR10/QCR9, UQCR11/QCR10 and a cleavage product of UQCRFS1). This cytochrome bc1 complex then forms a dimer. It depends on heme b as a cofactor.

It localises to the mitochondrion inner membrane. In terms of biological role, component of the ubiquinol-cytochrome c reductase complex (complex III or cytochrome b-c1 complex) that is part of the mitochondrial respiratory chain. The b-c1 complex mediates electron transfer from ubiquinol to cytochrome c. Contributes to the generation of a proton gradient across the mitochondrial membrane that is then used for ATP synthesis. This Oceanodroma tethys (Wedge-rumped storm-petrel) protein is Cytochrome b (MT-CYB).